A 338-amino-acid chain; its full sequence is Ketol-acid reductoisomerase (NADP(+)) (338 aa).

The region spanning 1–181 is the KARI N-terminal Rossmann domain; sequence MKVYYDKDAD…GGTRGGVIET (181 aa). Residues 24-27, Arg-47, and Ser-52 contribute to the NADP(+) site; that span reads YGSQ. Residue His-107 is part of the active site. NADP(+) is bound at residue Gly-133. Residues 182 to 327 enclose the KARI C-terminal knotted domain; it reads TFKEETETDL…AKLRDMMPWI (146 aa). Positions 190, 194, 226, and 230 each coordinate Mg(2+). Ser-251 is a substrate binding site.

This sequence belongs to the ketol-acid reductoisomerase family. Mg(2+) is required as a cofactor.

It carries out the reaction (2R)-2,3-dihydroxy-3-methylbutanoate + NADP(+) = (2S)-2-acetolactate + NADPH + H(+). The catalysed reaction is (2R,3R)-2,3-dihydroxy-3-methylpentanoate + NADP(+) = (S)-2-ethyl-2-hydroxy-3-oxobutanoate + NADPH + H(+). It participates in amino-acid biosynthesis; L-isoleucine biosynthesis; L-isoleucine from 2-oxobutanoate: step 2/4. Its pathway is amino-acid biosynthesis; L-valine biosynthesis; L-valine from pyruvate: step 2/4. Functionally, involved in the biosynthesis of branched-chain amino acids (BCAA). Catalyzes an alkyl-migration followed by a ketol-acid reduction of (S)-2-acetolactate (S2AL) to yield (R)-2,3-dihydroxy-isovalerate. In the isomerase reaction, S2AL is rearranged via a Mg-dependent methyl migration to produce 3-hydroxy-3-methyl-2-ketobutyrate (HMKB). In the reductase reaction, this 2-ketoacid undergoes a metal-dependent reduction by NADPH to yield (R)-2,3-dihydroxy-isovalerate. This Nitrosomonas europaea (strain ATCC 19718 / CIP 103999 / KCTC 2705 / NBRC 14298) protein is Ketol-acid reductoisomerase (NADP(+)).